A 30-amino-acid polypeptide reads, in one-letter code: Photosystem I reaction center subunit XII (30 aa).

The helical transmembrane segment at 7-29 (IYTVLCIALLAGILAIRLGSTLY) threads the bilayer.

This sequence belongs to the PsaM family.

It localises to the plastid. The protein localises to the chloroplast thylakoid membrane. This Phaeodactylum tricornutum (strain CCAP 1055/1) protein is Photosystem I reaction center subunit XII.